Consider the following 134-residue polypeptide: Arsenate reductase (134 aa).

Catalysis depends on nucleophile residues Cys11, Cys83, and Cys90. Intrachain disulfides connect Cys11–Cys83 and Cys83–Cys90.

This sequence belongs to the low molecular weight phosphotyrosine protein phosphatase family. Thioredoxin-coupled ArsC subfamily.

Its subcellular location is the cytoplasm. The catalysed reaction is arsenate + [thioredoxin]-dithiol + H(+) = arsenite + [thioredoxin]-disulfide + H2O. Functionally, catalyzes the reduction of arsenate [As(V)] to arsenite [As(III)]. This Brevibacillus brevis (strain 47 / JCM 6285 / NBRC 100599) protein is Arsenate reductase.